The following is a 638-amino-acid chain: 1-deoxy-D-xylulose-5-phosphate synthase (638 aa).

Residues histidine 79 and 120 to 122 each bind thiamine diphosphate; that span reads AHS. A Mg(2+)-binding site is contributed by aspartate 151. Thiamine diphosphate is bound by residues 152–153, asparagine 180, tyrosine 289, and glutamate 371; that span reads GA. Position 180 (asparagine 180) interacts with Mg(2+).

It belongs to the transketolase family. DXPS subfamily. Homodimer. Mg(2+) is required as a cofactor. Requires thiamine diphosphate as cofactor.

It catalyses the reaction D-glyceraldehyde 3-phosphate + pyruvate + H(+) = 1-deoxy-D-xylulose 5-phosphate + CO2. It functions in the pathway metabolic intermediate biosynthesis; 1-deoxy-D-xylulose 5-phosphate biosynthesis; 1-deoxy-D-xylulose 5-phosphate from D-glyceraldehyde 3-phosphate and pyruvate: step 1/1. In terms of biological role, catalyzes the acyloin condensation reaction between C atoms 2 and 3 of pyruvate and glyceraldehyde 3-phosphate to yield 1-deoxy-D-xylulose-5-phosphate (DXP). This is 1-deoxy-D-xylulose-5-phosphate synthase from Rhizobium johnstonii (strain DSM 114642 / LMG 32736 / 3841) (Rhizobium leguminosarum bv. viciae).